The sequence spans 104 residues: UPF0145 protein VIBHAR_02090 (104 aa).

It belongs to the UPF0145 family.

The polypeptide is UPF0145 protein VIBHAR_02090 (Vibrio campbellii (strain ATCC BAA-1116)).